The chain runs to 475 residues: Putative response regulator NtrX-like (475 aa).

The Response regulatory domain occupies 5–121 (DVLILDDEES…KLIILLKRAC (117 aa)). Position 54 is a 4-aspartylphosphate (Asp54). One can recognise a Sigma-54 factor interaction domain in the interval 143–369 (LVGGCSVTLK…LRNVVEWTLI (227 aa)). ATP is bound by residues 171–178 (GKVGSGKE) and 232–241 (ANNGTLYIDE).

Its function is as follows. Member of the two-component regulatory system RT0550/RT0603. This Rickettsia typhi (strain ATCC VR-144 / Wilmington) protein is Putative response regulator NtrX-like.